Reading from the N-terminus, the 512-residue chain is Maturase K (512 aa).

The protein belongs to the intron maturase 2 family. MatK subfamily.

The protein localises to the plastid. It is found in the chloroplast. Its function is as follows. Usually encoded in the trnK tRNA gene intron. Probably assists in splicing its own and other chloroplast group II introns. In Amorphophallus titanum (Titan arum), this protein is Maturase K.